We begin with the raw amino-acid sequence, 373 residues long: GDP-mannose 4,6 dehydratase 2 (373 aa).

Residues 1 to 15 are compositionally biased toward polar residues; it reads MASENNGSRSDSESI. Positions 1–21 are disordered; the sequence is MASENNGSRSDSESITAPKAD. NADP(+)-binding positions include 35–40, arginine 60, 91–92, 113–117, and tyrosine 128; these read GITGQD, DL, and LAAQS. Residue serine 117 coordinates substrate. Serine 162 contributes to the substrate binding site. Serine 162 is a catalytic residue. Catalysis depends on nucleophile residues glutamate 164 and tyrosine 185. Tyrosine 185 provides a ligand contact to substrate. Residue lysine 189 participates in NADP(+) binding. Asparagine 214 is a binding site for substrate. 2 residues coordinate NADP(+): histidine 215 and arginine 220. Residues 220–228, glycine 247, arginine 253, and 314–317 contribute to the substrate site; these read RGENFVTRK and RPAE.

The protein belongs to the NAD(P)-dependent epimerase/dehydratase family. GDP-mannose 4,6-dehydratase subfamily. As to quaternary structure, homotetramer. Binds to GER1. NADP(+) is required as a cofactor. In terms of tissue distribution, expressed in roots, flowers, siliques, leaves and stems. Not expressed in the root meristem and the proximal part of the elongation zone, or in emerging lateral roots. Expressed in trichomes and guard cells, and in pollen just before anthesis.

It catalyses the reaction GDP-alpha-D-mannose = GDP-4-dehydro-alpha-D-rhamnose + H2O. It participates in nucleotide-sugar biosynthesis; GDP-L-fucose biosynthesis via de novo pathway; GDP-L-fucose from GDP-alpha-D-mannose: step 1/2. In terms of biological role, catalyzes the conversion of GDP-D-mannose to GDP-4-dehydro-6-deoxy-D-mannose. The chain is GDP-mannose 4,6 dehydratase 2 (MUR1) from Arabidopsis thaliana (Mouse-ear cress).